The chain runs to 341 residues: Glycerol-3-phosphate dehydrogenase [NAD(P)+] (341 aa).

Ser-14, Phe-15, Arg-35, and Lys-108 together coordinate NADPH. Sn-glycerol 3-phosphate is bound by residues Lys-108 and Gly-136. Ala-140 contributes to the NADPH binding site. Lys-191, Asp-244, Ser-254, Arg-255, and Asn-256 together coordinate sn-glycerol 3-phosphate. Catalysis depends on Lys-191, which acts as the Proton acceptor. Arg-255 contacts NADPH. Val-279 and Glu-281 together coordinate NADPH.

The protein belongs to the NAD-dependent glycerol-3-phosphate dehydrogenase family.

Its subcellular location is the cytoplasm. It catalyses the reaction sn-glycerol 3-phosphate + NAD(+) = dihydroxyacetone phosphate + NADH + H(+). The enzyme catalyses sn-glycerol 3-phosphate + NADP(+) = dihydroxyacetone phosphate + NADPH + H(+). It functions in the pathway membrane lipid metabolism; glycerophospholipid metabolism. Its function is as follows. Catalyzes the reduction of the glycolytic intermediate dihydroxyacetone phosphate (DHAP) to sn-glycerol 3-phosphate (G3P), the key precursor for phospholipid synthesis. The protein is Glycerol-3-phosphate dehydrogenase [NAD(P)+] of Pseudomonas entomophila (strain L48).